A 183-amino-acid polypeptide reads, in one-letter code: Dual-action ribosomal maturation protein DarP (183 aa).

The protein belongs to the DarP family.

It localises to the cytoplasm. In terms of biological role, member of a network of 50S ribosomal subunit biogenesis factors which assembles along the 30S-50S interface, preventing incorrect 23S rRNA structures from forming. Promotes peptidyl transferase center (PTC) maturation. The protein is Dual-action ribosomal maturation protein DarP of Salmonella enteritidis PT4 (strain P125109).